Consider the following 228-residue polypeptide: Uracil-DNA glycosylase (228 aa).

The Proton acceptor role is filled by D64.

It belongs to the uracil-DNA glycosylase (UDG) superfamily. UNG family. Monomer.

It localises to the cytoplasm. The enzyme catalyses Hydrolyzes single-stranded DNA or mismatched double-stranded DNA and polynucleotides, releasing free uracil.. Excises uracil residues from the DNA which can arise as a result of misincorporation of dUMP residues by DNA polymerase or due to deamination of cytosine. The chain is Uracil-DNA glycosylase from Escherichia coli O6:H1 (strain CFT073 / ATCC 700928 / UPEC).